Here is a 259-residue protein sequence, read N- to C-terminus: Glutathione S-transferase domain-containing protein DDB_G0274705 (259 aa).

The region spanning 7 to 96 (KIDYIFYTNN…YLAQKFNTFL (90 aa)) is the GST N-terminal domain. The region spanning 102 to 232 (NPLENSEVIT…GFKNFNPSLL (131 aa)) is the GST C-terminal domain.

Belongs to the GST superfamily.

The chain is Glutathione S-transferase domain-containing protein DDB_G0274705 from Dictyostelium discoideum (Social amoeba).